Consider the following 359-residue polypeptide: Ornithine cyclodeaminase (359 aa).

Residues arginine 53 and lysine 77 each coordinate L-ornithine. Residues threonine 92, arginine 120, alanine 147 to glutamine 148, aspartate 169, threonine 209, valine 232 to aspartate 235, lysine 239, and serine 300 contribute to the NAD(+) site. Arginine 120 contacts L-ornithine. Residue aspartate 235 coordinates L-ornithine. Residue aspartate 235 is the Proton donor/acceptor of the active site. Residue valine 301 participates in L-ornithine binding.

Belongs to the ornithine cyclodeaminase/mu-crystallin family. It depends on NAD(+) as a cofactor.

It catalyses the reaction L-ornithine = L-proline + NH4(+). The protein operates within amino-acid biosynthesis; L-proline biosynthesis; L-proline from L-ornithine: step 1/1. Its function is as follows. Catalyzes the conversion of L-ornithine into L-proline with release of ammonia. The sequence is that of Ornithine cyclodeaminase from Brucella abortus biovar 1 (strain 9-941).